Reading from the N-terminus, the 335-residue chain is MLP-like protein 28 (335 aa).

Belongs to the MLP family.

Functionally, can bind steroids (in vitro), and may also bind other types of hydrophobic ligands. The chain is MLP-like protein 28 (MLP28) from Arabidopsis thaliana (Mouse-ear cress).